Here is a 353-residue protein sequence, read N- to C-terminus: Photosystem II D2 protein (353 aa).

Thr2 is modified (N-acetylthreonine). A Phosphothreonine modification is found at Thr2. The helical transmembrane segment at 41-61 (CAYFALGGWFTGTTFVTSWYT) threads the bilayer. A chlorophyll a-binding site is contributed by His118. The helical transmembrane segment at 125-141 (GFMLRQFELARSVQLRP) threads the bilayer. Pheophytin a is bound by residues Gln130 and Asn143. A helical membrane pass occupies residues 153-166 (VFVSVSLIYPLGQA). His198 provides a ligand contact to chlorophyll a. The chain crosses the membrane as a helical span at residues 208–228 (AALLCAIHGATVENTLFEDGD). Positions 215 and 262 each coordinate a plastoquinone. Position 215 (His215) interacts with Fe cation. Residue His269 coordinates Fe cation. A helical membrane pass occupies residues 279 to 295 (GLWMSAIGVVGLALNLR).

Belongs to the reaction center PufL/M/PsbA/D family. In terms of assembly, PSII is composed of 1 copy each of membrane proteins PsbA, PsbB, PsbC, PsbD, PsbE, PsbF, PsbH, PsbI, PsbJ, PsbK, PsbL, PsbM, PsbT, PsbX, PsbY, PsbZ, Psb30/Ycf12, at least 3 peripheral proteins of the oxygen-evolving complex and a large number of cofactors. It forms dimeric complexes. It depends on The D1/D2 heterodimer binds P680, chlorophylls that are the primary electron donor of PSII, and subsequent electron acceptors. It shares a non-heme iron and each subunit binds pheophytin, quinone, additional chlorophylls, carotenoids and lipids. There is also a Cl(-1) ion associated with D1 and D2, which is required for oxygen evolution. The PSII complex binds additional chlorophylls, carotenoids and specific lipids. as a cofactor.

The protein resides in the plastid. It is found in the chloroplast thylakoid membrane. It carries out the reaction 2 a plastoquinone + 4 hnu + 2 H2O = 2 a plastoquinol + O2. Functionally, photosystem II (PSII) is a light-driven water:plastoquinone oxidoreductase that uses light energy to abstract electrons from H(2)O, generating O(2) and a proton gradient subsequently used for ATP formation. It consists of a core antenna complex that captures photons, and an electron transfer chain that converts photonic excitation into a charge separation. The D1/D2 (PsbA/PsbD) reaction center heterodimer binds P680, the primary electron donor of PSII as well as several subsequent electron acceptors. D2 is needed for assembly of a stable PSII complex. This is Photosystem II D2 protein from Angiopteris evecta (Mule's foot fern).